Consider the following 314-residue polypeptide: Homoserine O-succinyltransferase (314 aa).

C142 serves as the catalytic Acyl-thioester intermediate. Positions 163 and 192 each coordinate substrate. The Proton acceptor role is filled by H235. Residue E237 is part of the active site. A substrate-binding site is contributed by R249.

It belongs to the MetA family.

The protein resides in the cytoplasm. The enzyme catalyses L-homoserine + succinyl-CoA = O-succinyl-L-homoserine + CoA. It participates in amino-acid biosynthesis; L-methionine biosynthesis via de novo pathway; O-succinyl-L-homoserine from L-homoserine: step 1/1. Functionally, transfers a succinyl group from succinyl-CoA to L-homoserine, forming succinyl-L-homoserine. This chain is Homoserine O-succinyltransferase, found in Photobacterium profundum (strain SS9).